Here is a 134-residue protein sequence, read N- to C-terminus: ATP synthase epsilon chain (134 aa).

This sequence belongs to the ATPase epsilon chain family. In terms of assembly, F-type ATPases have 2 components, CF(1) - the catalytic core - and CF(0) - the membrane proton channel. CF(1) has five subunits: alpha(3), beta(3), gamma(1), delta(1), epsilon(1). CF(0) has three main subunits: a, b and c.

The protein localises to the cellular thylakoid membrane. Produces ATP from ADP in the presence of a proton gradient across the membrane. The protein is ATP synthase epsilon chain of Prochlorococcus marinus (strain AS9601).